We begin with the raw amino-acid sequence, 269 residues long: Triosephosphate isomerase (269 aa).

8–10 is a substrate binding site; sequence NWK. His105 (electrophile) is an active-site residue. Glu183 functions as the Proton acceptor in the catalytic mechanism. Substrate contacts are provided by residues Gly189, Ser227, and 248-249; that span reads GG.

Belongs to the triosephosphate isomerase family. In terms of assembly, homodimer.

The protein resides in the cytoplasm. It catalyses the reaction D-glyceraldehyde 3-phosphate = dihydroxyacetone phosphate. The protein operates within carbohydrate biosynthesis; gluconeogenesis. It functions in the pathway carbohydrate degradation; glycolysis; D-glyceraldehyde 3-phosphate from glycerone phosphate: step 1/1. In terms of biological role, involved in the gluconeogenesis. Catalyzes stereospecifically the conversion of dihydroxyacetone phosphate (DHAP) to D-glyceraldehyde-3-phosphate (G3P). In Psychrobacter arcticus (strain DSM 17307 / VKM B-2377 / 273-4), this protein is Triosephosphate isomerase.